The following is a 105-amino-acid chain: Small ribosomal subunit protein uS10 (105 aa).

The protein belongs to the universal ribosomal protein uS10 family. In terms of assembly, part of the 30S ribosomal subunit.

In terms of biological role, involved in the binding of tRNA to the ribosomes. The protein is Small ribosomal subunit protein uS10 of Rickettsia akari (strain Hartford).